The sequence spans 377 residues: Anhydro-N-acetylmuramic acid kinase (377 aa).

Position 18-25 (18-25 (GTSADGID)) interacts with ATP.

The protein belongs to the anhydro-N-acetylmuramic acid kinase family.

The enzyme catalyses 1,6-anhydro-N-acetyl-beta-muramate + ATP + H2O = N-acetyl-D-muramate 6-phosphate + ADP + H(+). It participates in amino-sugar metabolism; 1,6-anhydro-N-acetylmuramate degradation. It functions in the pathway cell wall biogenesis; peptidoglycan recycling. In terms of biological role, catalyzes the specific phosphorylation of 1,6-anhydro-N-acetylmuramic acid (anhMurNAc) with the simultaneous cleavage of the 1,6-anhydro ring, generating MurNAc-6-P. Is required for the utilization of anhMurNAc either imported from the medium or derived from its own cell wall murein, and thus plays a role in cell wall recycling. The chain is Anhydro-N-acetylmuramic acid kinase from Xanthomonas oryzae pv. oryzae (strain MAFF 311018).